The primary structure comprises 132 residues: Small ribosomal subunit protein uS8c (132 aa).

It belongs to the universal ribosomal protein uS8 family. Part of the 30S ribosomal subunit.

Its subcellular location is the plastid. The protein resides in the chloroplast. Its function is as follows. One of the primary rRNA binding proteins, it binds directly to 16S rRNA central domain where it helps coordinate assembly of the platform of the 30S subunit. This chain is Small ribosomal subunit protein uS8c (rps8), found in Illicium oligandrum (Star anise).